The sequence spans 473 residues: Glutamate--tRNA ligase 1 (473 aa).

The 'HIGH' region signature appears at 10 to 20; that stretch reads PSPTGFLHIGG. Positions 252–256 match the 'KMSKS' region motif; that stretch reads KLSKR. Position 255 (Lys-255) interacts with ATP.

It belongs to the class-I aminoacyl-tRNA synthetase family. Glutamate--tRNA ligase type 1 subfamily. In terms of assembly, monomer.

Its subcellular location is the cytoplasm. The enzyme catalyses tRNA(Glu) + L-glutamate + ATP = L-glutamyl-tRNA(Glu) + AMP + diphosphate. Its function is as follows. Catalyzes the attachment of glutamate to tRNA(Glu) in a two-step reaction: glutamate is first activated by ATP to form Glu-AMP and then transferred to the acceptor end of tRNA(Glu). In Wolbachia pipientis wMel, this protein is Glutamate--tRNA ligase 1.